A 105-amino-acid chain; its full sequence is MARSLCFMAFAILAMMLFVAYEVQARECKTESNTFPGICITKPPCRKACISEKFTDGHCSKILRRCLCTKPCVFDEKMTKTGAEILAEEAKTLAAALLEEEIMDN.

The first 25 residues, M1–A25, serve as a signal peptide directing secretion. 4 disulfide bridges follow: C28-C72, C39-C59, C45-C66, and C49-C68. A propeptide spans V73–N105 (removed in mature form).

This sequence belongs to the DEFL family. As to expression, most abundant in the epidermal cell layers of the petals and sepals, within the connective cells of the anthers, and the cortical cells of the style. Not detected in the tapetum, pollen mother cells, the transmitting tissue, the vascular bundles of the anther and style or in leaves. Expressed also in ovaries, but barley detectable in roots.

Its subcellular location is the secreted. It localises to the vacuole. Plant defense peptide with antifungal activity against F.oxysporum and B.cinerea. Retards the growth of the Lepidopteran insect pests H.armigera and H.punctigera. The polypeptide is Flower-specific defensin (D1) (Nicotiana alata (Winged tobacco)).